The chain runs to 329 residues: DNA-directed RNA polymerase subunit alpha (329 aa).

Positions 1-235 (MQGFVEDFLK…QQLEAFVDLR (235 aa)) are alpha N-terminal domain (alpha-NTD). Residues 249–329 (FEPVLLRPVD…NWPPKSLLED (81 aa)) are alpha C-terminal domain (alpha-CTD).

Belongs to the RNA polymerase alpha chain family. As to quaternary structure, homodimer. The RNAP catalytic core consists of 2 alpha, 1 beta, 1 beta' and 1 omega subunit. When a sigma factor is associated with the core the holoenzyme is formed, which can initiate transcription.

The catalysed reaction is RNA(n) + a ribonucleoside 5'-triphosphate = RNA(n+1) + diphosphate. DNA-dependent RNA polymerase catalyzes the transcription of DNA into RNA using the four ribonucleoside triphosphates as substrates. The sequence is that of DNA-directed RNA polymerase subunit alpha from Buchnera aphidicola subsp. Cinara cedri (strain Cc).